Here is a 387-residue protein sequence, read N- to C-terminus: Gamma-butyrobetaine dioxygenase (387 aa).

Zn(2+) contacts are provided by Cys-38, Cys-40, Cys-43, and His-82. His-202, Asp-204, and His-347 together coordinate Fe cation. Ser-351 carries the phosphoserine modification.

It belongs to the gamma-BBH/TMLD family. It depends on Fe(2+) as a cofactor. L-ascorbate is required as a cofactor. In terms of tissue distribution, highly expressed in kidney; moderately expressed in liver; very low expression in brain.

The protein localises to the cytoplasm. It carries out the reaction 4-(trimethylamino)butanoate + 2-oxoglutarate + O2 = carnitine + succinate + CO2. It functions in the pathway amine and polyamine biosynthesis; carnitine biosynthesis. Its function is as follows. Catalyzes the formation of L-carnitine from gamma-butyrobetaine. In Homo sapiens (Human), this protein is Gamma-butyrobetaine dioxygenase (BBOX1).